Consider the following 155-residue polypeptide: Ribosomal RNA large subunit methyltransferase H (155 aa).

Residues L72, G103, and 122-127 each bind S-adenosyl-L-methionine; that span reads LSDLTL.

The protein belongs to the RNA methyltransferase RlmH family. In terms of assembly, homodimer.

It is found in the cytoplasm. It carries out the reaction pseudouridine(1915) in 23S rRNA + S-adenosyl-L-methionine = N(3)-methylpseudouridine(1915) in 23S rRNA + S-adenosyl-L-homocysteine + H(+). Its function is as follows. Specifically methylates the pseudouridine at position 1915 (m3Psi1915) in 23S rRNA. This is Ribosomal RNA large subunit methyltransferase H from Acidovorax sp. (strain JS42).